We begin with the raw amino-acid sequence, 162 residues long: G/U mismatch-specific DNA glycosylase (162 aa).

It belongs to the uracil-DNA glycosylase (UDG) superfamily. TDG/mug family. Binds DNA as a monomer.

It is found in the cytoplasm. The catalysed reaction is Specifically hydrolyzes mismatched double-stranded DNA and polynucleotides, releasing free uracil.. Excises ethenocytosine and uracil, which can arise by alkylation or deamination of cytosine, respectively, from the corresponding mispairs with guanine in ds-DNA. It is capable of hydrolyzing the carbon-nitrogen bond between the sugar-phosphate backbone of the DNA and the mispaired base. The complementary strand guanine functions in substrate recognition. Required for DNA damage lesion repair in stationary-phase cells. The polypeptide is G/U mismatch-specific DNA glycosylase (Serratia marcescens).